Here is a 102-residue protein sequence, read N- to C-terminus: Small ribosomal subunit protein uS14 (102 aa).

It belongs to the universal ribosomal protein uS14 family. Part of the 30S ribosomal subunit. Contacts proteins S3 and S10.

Functionally, binds 16S rRNA, required for the assembly of 30S particles and may also be responsible for determining the conformation of the 16S rRNA at the A site. The protein is Small ribosomal subunit protein uS14 of Wolbachia pipientis subsp. Culex pipiens (strain wPip).